A 277-amino-acid chain; its full sequence is MALKHFKPVTASLRGTVLVDRSELWKGKPVKGLTEGLTSSGGRNNHGRTTVRFRGGGHKRAYRVVDFKRRKFDVAATVERLEYDPNRSAFLALVKYEDGELAYILAPQRLKVGDQVVAGVKVDVKPGNAMPLSAIPVGTIVHNIELKAGAGGKLARSAGTFAQLVGKDQGYAQVKLMSGELRLIRGECMASIGAVSNPDHSNQQLGKAGRKRWLGRRPHNRGVAMNPVDHPLGGGEGRTSGGRNPVTPWGKPTKGAKTRANKRTDGLIIRRRKVGKG.

Positions 216–277 (RRPHNRGVAM…IIRRRKVGKG (62 aa)) are disordered.

The protein belongs to the universal ribosomal protein uL2 family. In terms of assembly, part of the 50S ribosomal subunit. Forms a bridge to the 30S subunit in the 70S ribosome.

Functionally, one of the primary rRNA binding proteins. Required for association of the 30S and 50S subunits to form the 70S ribosome, for tRNA binding and peptide bond formation. It has been suggested to have peptidyltransferase activity; this is somewhat controversial. Makes several contacts with the 16S rRNA in the 70S ribosome. The sequence is that of Large ribosomal subunit protein uL2 from Acidiphilium cryptum (strain JF-5).